The primary structure comprises 200 residues: Small ribosomal subunit protein uS2 (200 aa).

The protein belongs to the universal ribosomal protein uS2 family.

The polypeptide is Small ribosomal subunit protein uS2 (Picrophilus torridus (strain ATCC 700027 / DSM 9790 / JCM 10055 / NBRC 100828 / KAW 2/3)).